The primary structure comprises 166 residues: uncharacterized protein (166 aa).

Composition is skewed to basic and acidic residues over residues 1 to 13 (MAEVSKKRCEHNS), 21 to 112 (KAND…KTKE), and 119 to 137 (DNVENKDKNEVYENIKEGG). Residues 1-144 (MAEVSKKRCE…EGGSKAWNKT (144 aa)) are disordered. A run of 8 repeats spans residues 31 to 41 (DKTKETAGSAK), 42 to 52 (DKTKETAGSAK), 53 to 63 (DKTKETAESAK), 64 to 74 (DKTKETAGSAK), 75 to 85 (DKTKETAESAK), 86 to 96 (DKTKETAGSAK), 97 to 107 (DKTKETAESAK), and 108 to 118 (DKTKETAGNVR). The 8 X 11 AA approximate tandem repeats of D-K-T-K-E-T-A-G/E-S-A-K stretch occupies residues 31–118 (DKTKETAGSA…KTKETAGNVR (88 aa)).

This sequence belongs to the LEA type 1 family.

This is an uncharacterized protein from Encephalitozoon cuniculi (strain GB-M1) (Microsporidian parasite).